The chain runs to 253 residues: Sortase SrtE2 (253 aa).

Basic and acidic residues predominate over residues 1–11; that stretch reads MAATTDTEHQE. Residues 1–23 form a disordered region; that stretch reads MAATTDTEHQEQAGTGGRGRRRP. The helical transmembrane segment at 30–50 threads the bilayer; it reads AVSVLGELLITAGLVMGLFVV. A disordered region spans residues 69–89; that stretch reads EKVRDDWAQDRVGGSGQDGPG. Cys-220 is a catalytic residue.

This sequence belongs to the bacterial sortase family. Class E subfamily.

It localises to the cell membrane. It carries out the reaction The enzyme catalyzes a cell wall sorting reaction in which a surface protein with a sorting signal containing a LPXTG motif is cleaved between the Thr and Gly residue. The resulting threonine carboxyl end of the protein is covalently attached to a pentaglycine cross-bridge of peptidoglycan.. Its function is as follows. Transpeptidase that anchors surface proteins to the cell wall. Recognizes Leu-Ala-x-Thr-Gly and Leu-Pro-x-Thr-Gly, with a preference for the former. Unlike the S.aureus sortase it cleaves not only the Thr-Gly motif but also the Ala-X bond; an Ala-Glu bond is a better substrate than the Thr-Gly motif in vitro. Among its possible substrates are the chaplins ChpA, ChpB and ChpC; this enzyme is more important for ChpC attachment than is SrtE1. A double knockout mutant of srtE1 and srtE2 shows a developmental defect in aerial hyphae formation more dramatic than that due to chaplin deletion. In Streptomyces coelicolor (strain ATCC BAA-471 / A3(2) / M145), this protein is Sortase SrtE2.